Consider the following 197-residue polypeptide: Thymidylate kinase (197 aa).

7–14 serves as a coordination point for ATP; that stretch reads GIDGCGKS.

It belongs to the thymidylate kinase family.

The enzyme catalyses dTMP + ATP = dTDP + ADP. Phosphorylation of dTMP to form dTDP in both de novo and salvage pathways of dTTP synthesis. The chain is Thymidylate kinase from Fervidobacterium nodosum (strain ATCC 35602 / DSM 5306 / Rt17-B1).